The primary structure comprises 406 residues: Acetate kinase (406 aa).

Asparagine 7 lines the Mg(2+) pocket. Lysine 14 is a binding site for ATP. Arginine 90 is a substrate binding site. Catalysis depends on aspartate 147, which acts as the Proton donor/acceptor. Residues 207-211 (HLGNG), 283-285 (DMR), and 331-335 (GVGEN) contribute to the ATP site. Glutamate 385 serves as a coordination point for Mg(2+).

It belongs to the acetokinase family. Homodimer. Requires Mg(2+) as cofactor. It depends on Mn(2+) as a cofactor.

The protein resides in the cytoplasm. The enzyme catalyses acetate + ATP = acetyl phosphate + ADP. It functions in the pathway metabolic intermediate biosynthesis; acetyl-CoA biosynthesis; acetyl-CoA from acetate: step 1/2. Functionally, catalyzes the formation of acetyl phosphate from acetate and ATP. Can also catalyze the reverse reaction. The polypeptide is Acetate kinase (Thermosipho africanus (strain TCF52B)).